We begin with the raw amino-acid sequence, 689 residues long: Armadillo-like helical domain-containing protein 3 (689 aa).

A helical membrane pass occupies residues 520–538 (IFTLTLMVVNLFNMFITYG).

This sequence belongs to the ARMH3 family.

Its subcellular location is the golgi apparatus membrane. It localises to the cytoplasm. Functionally, may be involved in Golgi maintenance and protein secretion. The sequence is that of Armadillo-like helical domain-containing protein 3 from Xenopus laevis (African clawed frog).